Reading from the N-terminus, the 66-residue chain is MKNGTVKWFNADKGFGFITGEDGTDVFVHFSAIQTDGFKTLDEGQKVTYDEEQGDRGPQATNVQPQ.

A CSD domain is found at 4–63 (GTVKWFNADKGFGFITGEDGTDVFVHFSAIQTDGFKTLDEGQKVTYDEEQGDRGPQATNV).

It localises to the cytoplasm. The protein is Cold shock protein 2 (cspL) of Lactiplantibacillus plantarum (strain ATCC BAA-793 / NCIMB 8826 / WCFS1) (Lactobacillus plantarum).